A 473-amino-acid polypeptide reads, in one-letter code: Probable glycine dehydrogenase (decarboxylating) subunit 2 (473 aa).

The interval 1–40 is disordered; it reads MEHYEQARYAPAEGETNEPLLSENDQTTVSVDPSLPDDLT. Lysine 270 carries the post-translational modification N6-(pyridoxal phosphate)lysine.

It belongs to the GcvP family. C-terminal subunit subfamily. In terms of assembly, the glycine cleavage system is composed of four proteins: P, T, L and H. In this organism, the P 'protein' is a heterodimer of two subunits. Pyridoxal 5'-phosphate serves as cofactor.

It carries out the reaction N(6)-[(R)-lipoyl]-L-lysyl-[glycine-cleavage complex H protein] + glycine + H(+) = N(6)-[(R)-S(8)-aminomethyldihydrolipoyl]-L-lysyl-[glycine-cleavage complex H protein] + CO2. Functionally, the glycine cleavage system catalyzes the degradation of glycine. The P protein binds the alpha-amino group of glycine through its pyridoxal phosphate cofactor; CO(2) is released and the remaining methylamine moiety is then transferred to the lipoamide cofactor of the H protein. The protein is Probable glycine dehydrogenase (decarboxylating) subunit 2 of Halobacterium salinarum (strain ATCC 700922 / JCM 11081 / NRC-1) (Halobacterium halobium).